The primary structure comprises 93 residues: MGSLSPWHWAILAVVVILLFGAKKLPDAARSLGKSMRIFKSELREMQSENKTETSALGAQSESSAANPTPVQSQRVDPPAPSEQGHSEARPAS.

A helical transmembrane segment spans residues 1 to 21 (MGSLSPWHWAILAVVVILLFG). The interval 45–93 (EMQSENKTETSALGAQSESSAANPTPVQSQRVDPPAPSEQGHSEARPAS) is disordered. A compositionally biased stretch (polar residues) spans 53–75 (ETSALGAQSESSAANPTPVQSQR).

It belongs to the TatA/E family. In terms of assembly, the Tat system comprises two distinct complexes: a TatABC complex, containing multiple copies of TatA, TatB and TatC subunits, and a separate TatA complex, containing only TatA subunits. Substrates initially bind to the TatABC complex, which probably triggers association of the separate TatA complex to form the active translocon.

It localises to the cell membrane. Its function is as follows. Part of the twin-arginine translocation (Tat) system that transports large folded proteins containing a characteristic twin-arginine motif in their signal peptide across membranes. TatA could form the protein-conducting channel of the Tat system. This chain is Sec-independent protein translocase protein TatA, found in Mycolicibacterium paratuberculosis (strain ATCC BAA-968 / K-10) (Mycobacterium paratuberculosis).